A 360-amino-acid polypeptide reads, in one-letter code: MRVFNFSAGPAALPEEVLRQAADEMLDWHGSGMSVMEMSHRGKEFMSIHETALADLRELLDVPASHRILFLQGGGIAENAIVPMNLLGWRKSADFVVTGSWSQKSFNEAKKYCTPHLAASGKTADGFTRAPTRAEWQLSDDPAYVHLCTNETIDGVETFEIPDLGDVPLVADVSSHILSRPMDVAKYGVLFGGAQKNIGMAGVTVVIVREDLLDRALSICPSAFEWKTVAENNSLYNTPPTYAIYIAGLVFQWLKRQGGLAAIEARNIEKAKLLYDTIDASGFYLNKVEPAVRSRMNVPFFLADETRNEDFLAGAKARGLLQLKGHKSVGGMRASIYNAVPLEGVKALVEYMKDFERRDA.

R41 is an L-glutamate binding site. W101, T152, D172, and Q195 together coordinate pyridoxal 5'-phosphate. K196 carries the N6-(pyridoxal phosphate)lysine modification. Residue 237 to 238 (NT) coordinates pyridoxal 5'-phosphate.

The protein belongs to the class-V pyridoxal-phosphate-dependent aminotransferase family. SerC subfamily. As to quaternary structure, homodimer. Pyridoxal 5'-phosphate serves as cofactor.

It localises to the cytoplasm. The enzyme catalyses O-phospho-L-serine + 2-oxoglutarate = 3-phosphooxypyruvate + L-glutamate. It carries out the reaction 4-(phosphooxy)-L-threonine + 2-oxoglutarate = (R)-3-hydroxy-2-oxo-4-phosphooxybutanoate + L-glutamate. Its pathway is amino-acid biosynthesis; L-serine biosynthesis; L-serine from 3-phospho-D-glycerate: step 2/3. The protein operates within cofactor biosynthesis; pyridoxine 5'-phosphate biosynthesis; pyridoxine 5'-phosphate from D-erythrose 4-phosphate: step 3/5. In terms of biological role, catalyzes the reversible conversion of 3-phosphohydroxypyruvate to phosphoserine and of 3-hydroxy-2-oxo-4-phosphonooxybutanoate to phosphohydroxythreonine. This is Phosphoserine aminotransferase from Burkholderia vietnamiensis (strain G4 / LMG 22486) (Burkholderia cepacia (strain R1808)).